A 364-amino-acid polypeptide reads, in one-letter code: Leucine dehydrogenase (364 aa).

The active site involves lysine 80. 180–186 (GVGNVAY) lines the NAD(+) pocket.

It belongs to the Glu/Leu/Phe/Val dehydrogenases family.

It catalyses the reaction L-leucine + NAD(+) + H2O = 4-methyl-2-oxopentanoate + NH4(+) + NADH + H(+). Its pathway is amino-acid degradation; L-leucine degradation; 4-methyl-2-oxopentanoate from L-leucine (dehydrogenase route): step 1/1. In terms of biological role, catalyzes the reversible deamination of L-leucine to 4-methyl-2-oxopentanoate. This Bacillus subtilis (strain 168) protein is Leucine dehydrogenase (yqiT).